Consider the following 134-residue polypeptide: Methylglyoxal synthase (134 aa).

The MGS-like domain maps to 1 to 134 (MKIALIAHDR…DWRLIQERRN (134 aa)). Residues His8, Lys12, 34–37 (TGTT), and 54–55 (SG) each bind substrate. Asp60 (proton donor/acceptor) is an active-site residue. His87 lines the substrate pocket.

It belongs to the methylglyoxal synthase family.

It catalyses the reaction dihydroxyacetone phosphate = methylglyoxal + phosphate. Catalyzes the formation of methylglyoxal from dihydroxyacetone phosphate. This is Methylglyoxal synthase from Lysinibacillus sphaericus (strain C3-41).